The following is a 723-amino-acid chain: MSPATRFTVISCLVVSLITPSETSSWFDPFIEWARSSPNMTCVNNRTGTRSLATEGLISFNFYEASRTVRTYQVPKCIFMSSVSKTIMQGVDLFESLESYRRRYYSYIIVPVHASFQIFIHDLRTDLSSPTEELTSPVDKTLPNVTIWHTPSGYVIRLLDVVTPRFEECTLFPNHTVIFDMTVPCSQEVYLRQTGKHQFAIVLTFTPSFFVLNIQTAQHQHVTENDEDVILIFGDVRSIDVKAPYSKPVLTLRQSYRDDLLIVAKTSIVNATYPFIKTQDFLKGTLSGNYLDFNHVYTEFNRLVIHNLVEGLCDAPPDDRTVSMVFSYAVLARTLYHTSNVTARLEDVALRYVRLTLARTFLQQCFDVGPRYMRFPTIDGALSVLLKLIRNSRDVDGGLKLSLTFALIFGNNTDMTKERDLENALYEMKSIHRAGLVSPLSPRQRSLLYMMAYVTHHTTAFPDIRREMLAMQTSLCSPQELYNWAPHVSSAGLTMQEMFTPCSGSGRRDYSEARIAEIVQLNPLTTKTPADLYRILAHFDRSNLTNFPALSCISHLSGYVAVTLRDVTYVVSSNVMLKGTSYPVTNLAVDKTMIVTVSPAQHPCEKTEVAHATRSIPIVKNITIGNDCEYCKSAIMEYDEVNGLSNIVYLADTADLVLVTNLDNRILASSPRTRYIMMTANGTLMEITSVIIDIRQTSIFMIMLYCSLGVLLLYGLYRLLHMI.

An N-terminal signal peptide occupies residues 1-23 (MSPATRFTVISCLVVSLITPSET). The Virion surface segment spans residues 24–700 (SSWFDPFIEW…IIDIRQTSIF (677 aa)). 4 N-linked (GlcNAc...) asparagine; by host glycosylation sites follow: N39, N45, N144, and N174. The segment at 197–263 (HQFAIVLTFT…QSYRDDLLIV (67 aa)) is interaction with gL. N270, N340, N411, N543, N621, and N681 each carry an N-linked (GlcNAc...) asparagine; by host glycan. Residues 701–721 (MIMLYCSLGVLLLYGLYRLLH) traverse the membrane as a helical segment. Topologically, residues 722–723 (MI) are intravirion.

It belongs to the herpesviridae glycoprotein H family. In terms of assembly, interacts with glycoprotein L (gL); this interaction is necessary for the correct processing and cell surface expression of gH. The heterodimer gH/gL seems to interact with gB trimers during fusion. In terms of processing, N-glycosylated, O-glycosylated, and sialylated.

The protein localises to the virion membrane. It is found in the host cell membrane. The protein resides in the host endosome membrane. In terms of biological role, the heterodimer glycoprotein H-glycoprotein L is required for the fusion of viral and plasma membranes leading to virus entry into the host cell. Following initial binding to host receptor, membrane fusion is mediated by the fusion machinery composed of gB and the heterodimer gH/gL. May also be involved in the fusion between the virion envelope and the outer nuclear membrane during virion morphogenesis. This Guinea pig cytomegalovirus (strain 22122) (GPCMV) protein is Envelope glycoprotein H.